The sequence spans 395 residues: Protein-arginine rhamnosyltransferase (395 aa).

DTDP-beta-L-rhamnose contacts are provided by residues 19–22 (NYGD), Y205, Q272, and 288–292 (RGEDS). D22 serves as the catalytic Proton acceptor. E290 is an active-site residue.

The protein belongs to the glycosyltransferase 104 family.

The catalysed reaction is dTDP-beta-L-rhamnose + L-arginyl-[protein] = N(omega)-(alpha-L-rhamnosyl)-L-arginyl-[protein] + dTDP + H(+). Its function is as follows. Protein-arginine rhamnosyltransferase that catalyzes the transfer of a single rhamnose to elongation factor P (EF-P) on 'Lys-32', a modification required for EF-P-dependent rescue of polyproline stalled ribosomes. The sequence is that of Protein-arginine rhamnosyltransferase from Shewanella oneidensis (strain ATCC 700550 / JCM 31522 / CIP 106686 / LMG 19005 / NCIMB 14063 / MR-1).